A 205-amino-acid polypeptide reads, in one-letter code: Max-like protein homolog 2 (205 aa).

Composition is skewed to low complexity over residues 1–12 and 26–40; these read MSRSRSAAASSS and SASS…ATNS. The segment at 1 to 58 is disordered; it reads MSRSRSAAASSSQKPDDMDLMSPDGSASSPSAPNTPATNSGGFSSDRKKATHLRCERQ. Residues 45–58 show a composition bias toward basic and acidic residues; that stretch reads SDRKKATHLRCERQ. Residues 47–60 are basic motif; the sequence is RKKATHLRCERQRR. Residues 47–101 enclose the bHLH domain; that stretch reads RKKATHLRCERQRREAINSGYSDLKDLIPQTTTSLGCKTTNAAILFRACDFMSQL. Positions 61 to 101 are helix-loop-helix motif; the sequence is EAINSGYSDLKDLIPQTTTSLGCKTTNAAILFRACDFMSQL. The stretch at 98 to 132 forms a coiled coil; the sequence is MSQLKTDISDADKQLAQLNAQAAALEMIASEYEQM.

As to expression, widely expressed.

It localises to the nucleus. It is found in the cytoplasm. The protein localises to the mitochondrion. In terms of biological role, transcription factor. Binds to the E box motif 5'-CACGTG-3', probably in a heterodimeric complex with mml-1. Involved in modulating longevity in response to TOR signaling, dietary restriction, the decline in protein homeostasis associated with normal aging, germline signaling and the insulin-like signaling pathway. Plays a role in autophagy. Involved in regulating migration of the ray 1 precursor cells in the male tail, acting in concert with Wnt and semaphorin signaling pathways. Regulates transcription of genes encoding extracellular matrix (ECM) components which may contribute to the substratum required for migration of the neighboring ray 1 precursor cells. Required for resistance to oxidative stress. Involved in promoting infection by the microsporidian pathogen N.parisii, probably acting independently of its canonical partner, mml-1. The protein is Max-like protein homolog 2 of Caenorhabditis elegans.